The primary structure comprises 430 residues: Enolase (430 aa).

Gln165 lines the (2R)-2-phosphoglycerate pocket. The active-site Proton donor is the Glu207. Asp244, Glu287, and Asp314 together coordinate Mg(2+). (2R)-2-phosphoglycerate contacts are provided by Lys339, Arg368, Ser369, and Lys390. Catalysis depends on Lys339, which acts as the Proton acceptor.

It belongs to the enolase family. Component of the RNA degradosome, a multiprotein complex involved in RNA processing and mRNA degradation. Requires Mg(2+) as cofactor.

It is found in the cytoplasm. The protein resides in the secreted. Its subcellular location is the cell surface. The catalysed reaction is (2R)-2-phosphoglycerate = phosphoenolpyruvate + H2O. It functions in the pathway carbohydrate degradation; glycolysis; pyruvate from D-glyceraldehyde 3-phosphate: step 4/5. Its function is as follows. Catalyzes the reversible conversion of 2-phosphoglycerate (2-PG) into phosphoenolpyruvate (PEP). It is essential for the degradation of carbohydrates via glycolysis. The protein is Enolase of Stenotrophomonas maltophilia (strain K279a).